Consider the following 433-residue polypeptide: Putative wall-associated receptor kinase-like 16 (433 aa).

The signal sequence occupies residues 1–22 (MKLQHVVYLVAIFFVVAIFVIA). Residues 23–29 (CIEENKY) lie on the Extracellular side of the membrane. The helical transmembrane segment at 30–50 (LVWIMIILANTTNILSLVRSI) threads the bilayer. The Cytoplasmic segment spans residues 51 to 433 (SYIKNIRKHQ…VARFDIEAGR (383 aa)). Threonine 97 is modified (phosphothreonine). The 284-residue stretch at 108–391 (YDVSRILGQG…RAKTTKHNWL (284 aa)) folds into the Protein kinase domain. Residues 114–122 (LGQGGQWTV) and lysine 136 each bind ATP. A Phosphotyrosine modification is found at tyrosine 181. Aspartate 233 functions as the Proton acceptor in the catalytic mechanism. Threonine 267 and threonine 272 each carry phosphothreonine. A Phosphotyrosine modification is found at tyrosine 280.

This sequence belongs to the protein kinase superfamily. Ser/Thr protein kinase family.

Its subcellular location is the membrane. The catalysed reaction is L-seryl-[protein] + ATP = O-phospho-L-seryl-[protein] + ADP + H(+). It carries out the reaction L-threonyl-[protein] + ATP = O-phospho-L-threonyl-[protein] + ADP + H(+). Its function is as follows. Putative serine/threonine-protein kinase that may function as a signaling receptor of extracellular matrix component. This chain is Putative wall-associated receptor kinase-like 16 (WAKL16), found in Arabidopsis thaliana (Mouse-ear cress).